A 1562-amino-acid polypeptide reads, in one-letter code: E3 ubiquitin-protein ligase listerin (1562 aa).

HEAT repeat units follow at residues 41–78 (SLYS…DFNQ), 127–164 (KFLK…KDPA), 175–217 (EQLL…SAVL), 262–301 (ETVL…ITSK), 304–348 (LKVC…VSRT), 495–532 (SAIS…FLDS), 555–592 (STYQ…VALS), 813–850 (IRYA…DYNC), 908–945 (YYSR…KTVR), 997–1037 (FKSL…WLDS), 1047–1085 (TVRL…DSLS), 1188–1226 (INQS…SDVD), 1263–1298 (NSFI…KEAG), and 1299–1339 (LINR…NFSP). Residues 1508 to 1555 (CAICYSILHAVDRKLPSKTCPTCKNKFHGACLYKWFRSSGNNTCPLCR) form an RING-type zinc finger.

This sequence belongs to the LTN1 family. As to quaternary structure, component of the ribosome quality control complex (RQC), composed of the E3 ubiquitin ligase RKR1/LTN1, RQC1 and RQC2, as well as CDC48 and its ubiquitin-binding cofactors associated with the 60S ribosomal subunits.

Its subcellular location is the nucleus. It is found in the cytoplasm. It localises to the cytosol. The catalysed reaction is S-ubiquitinyl-[E2 ubiquitin-conjugating enzyme]-L-cysteine + [acceptor protein]-L-lysine = [E2 ubiquitin-conjugating enzyme]-L-cysteine + N(6)-ubiquitinyl-[acceptor protein]-L-lysine.. It participates in protein modification; protein ubiquitination. Functionally, E3 ubiquitin-protein ligase component of the ribosome quality control complex (RQC), a ribosome-associated complex that mediates ubiquitination and extraction of incompletely synthesized nascent chains for proteasomal degradation. Mediates ubiquitination of proteins derived from mRNAs lacking stop codons (non-stop proteins) and other translation arrest products induced by poly-lysine sequences and tandem rare codons. Ubiquitination leads to CDC48 recruitment for extraction and degradation of the incomplete translation product. May indirectly play a role in chromatin function and transcription. The chain is E3 ubiquitin-protein ligase listerin from Saccharomyces cerevisiae (strain ATCC 204508 / S288c) (Baker's yeast).